We begin with the raw amino-acid sequence, 182 residues long: Translation initiation factor IF-3 (182 aa).

The protein belongs to the IF-3 family. Monomer.

The protein resides in the cytoplasm. Its function is as follows. IF-3 binds to the 30S ribosomal subunit and shifts the equilibrium between 70S ribosomes and their 50S and 30S subunits in favor of the free subunits, thus enhancing the availability of 30S subunits on which protein synthesis initiation begins. This is Translation initiation factor IF-3 from Thermosynechococcus vestitus (strain NIES-2133 / IAM M-273 / BP-1).